A 157-amino-acid polypeptide reads, in one-letter code: MARALTTDESHIHKTLGAKVGLEEVEAVERIAIVVKDTRYSVESPVAYRIKGTDSILIFGDLGSPVNLHQLKRMYEDSIRSSKDQEGPGLYDEIHSDPQEDGVKEAEEITVDPSDERLSEEDIKLISSQVKASRNDIIKALVESEYDVVDAMMKLTK.

The 66-residue stretch at threonine 6 to leucine 71 folds into the NAC-A/B domain. Basic and acidic residues predominate over residues serine 81 to glutamate 107. A disordered region spans residues serine 81–glutamate 116. In terms of domain architecture, UBA spans leucine 118–lysine 157.

Belongs to the NAC-alpha family.

Its subcellular location is the cytoplasm. The protein localises to the nucleus. Functionally, may be involved in mitochondrial protein import by enhancing productive ribosome interactions with the outer mitochondrial membrane and blocks the inappropriate interaction of ribosomes translating non-secretory nascent polypeptides with translocation sites in the membrane of the endoplasmic reticulum. EGD2 may also be involved in transcription regulation. This is Nascent polypeptide-associated complex subunit alpha (EGD2) from Encephalitozoon cuniculi (strain GB-M1) (Microsporidian parasite).